Reading from the N-terminus, the 143-residue chain is Ribonuclease HI (143 aa).

The 136-residue stretch at 1–136 folds into the RNase H type-1 domain; sequence MQEIEIFCDG…CNSLAKLEAQ (136 aa). Mg(2+) contacts are provided by aspartate 9, glutamate 47, aspartate 69, and asparagine 128.

It belongs to the RNase H family. As to quaternary structure, monomer. It depends on Mg(2+) as a cofactor.

It localises to the cytoplasm. The enzyme catalyses Endonucleolytic cleavage to 5'-phosphomonoester.. Endonuclease that specifically degrades the RNA of RNA-DNA hybrids. This chain is Ribonuclease HI (rnhA), found in Helicobacter pylori (strain J99 / ATCC 700824) (Campylobacter pylori J99).